Reading from the N-terminus, the 224-residue chain is Ribose-5-phosphate isomerase A 1 (224 aa).

Residues 29–32 (SGST), 85–88 (DGAD), and 98–101 (KGGG) contribute to the substrate site. Glu107 functions as the Proton acceptor in the catalytic mechanism. Residue Lys125 coordinates substrate.

The protein belongs to the ribose 5-phosphate isomerase family. In terms of assembly, homodimer.

It catalyses the reaction aldehydo-D-ribose 5-phosphate = D-ribulose 5-phosphate. The protein operates within carbohydrate degradation; pentose phosphate pathway; D-ribose 5-phosphate from D-ribulose 5-phosphate (non-oxidative stage): step 1/1. In terms of biological role, catalyzes the reversible conversion of ribose-5-phosphate to ribulose 5-phosphate. The polypeptide is Ribose-5-phosphate isomerase A 1 (Oceanobacillus iheyensis (strain DSM 14371 / CIP 107618 / JCM 11309 / KCTC 3954 / HTE831)).